A 428-amino-acid chain; its full sequence is Gamma-glutamyl phosphate reductase (428 aa).

Belongs to the gamma-glutamyl phosphate reductase family.

Its subcellular location is the cytoplasm. The catalysed reaction is L-glutamate 5-semialdehyde + phosphate + NADP(+) = L-glutamyl 5-phosphate + NADPH + H(+). Its pathway is amino-acid biosynthesis; L-proline biosynthesis; L-glutamate 5-semialdehyde from L-glutamate: step 2/2. Catalyzes the NADPH-dependent reduction of L-glutamate 5-phosphate into L-glutamate 5-semialdehyde and phosphate. The product spontaneously undergoes cyclization to form 1-pyrroline-5-carboxylate. In Streptomyces avermitilis (strain ATCC 31267 / DSM 46492 / JCM 5070 / NBRC 14893 / NCIMB 12804 / NRRL 8165 / MA-4680), this protein is Gamma-glutamyl phosphate reductase.